We begin with the raw amino-acid sequence, 253 residues long: Succinate dehydrogenase iron-sulfur subunit (253 aa).

Residues cysteine 64, cysteine 69, and cysteine 84 each coordinate [2Fe-2S] cluster. Residues 146 to 174 (RQWAYELSKCMTCGVCLEACPNVNSKSKF) form the 4Fe-4S ferredoxin-type domain. Cysteine 155, cysteine 158, and cysteine 161 together coordinate [4Fe-4S] cluster. Cysteine 165, cysteine 212, and cysteine 218 together coordinate [3Fe-4S] cluster. Cysteine 222 serves as a coordination point for [4Fe-4S] cluster.

Belongs to the succinate dehydrogenase/fumarate reductase iron-sulfur protein family. In terms of assembly, in B.subtilis succinate dehydrogenase forms part of an enzyme complex containing three subunits: a flavoprotein, an iron-sulfur protein and cytochrome b-558. [2Fe-2S] cluster is required as a cofactor. The cofactor is [3Fe-4S] cluster. Requires [4Fe-4S] cluster as cofactor.

It carries out the reaction a quinone + succinate = fumarate + a quinol. The protein operates within carbohydrate metabolism; tricarboxylic acid cycle; fumarate from succinate (bacterial route): step 1/1. This chain is Succinate dehydrogenase iron-sulfur subunit (sdhB), found in Bacillus subtilis (strain 168).